We begin with the raw amino-acid sequence, 532 residues long: Invertase 2 (532 aa).

Positions 1 to 19 (MLLQAFLFLLAGFAAKISA) are cleaved as a signal peptide. N23 is a glycosylation site (N-linked (GlcNAc...) asparagine). Substrate contacts are provided by residues 39–42 (WMND) and Q60. Residue D42 is part of the active site. An N-linked (GlcNAc...) asparagine; partial glycan is attached at N64. N97 carries N-linked (GlcNAc...) asparagine glycosylation. 102 to 103 (FS) is a substrate binding site. 2 N-linked (GlcNAc...) asparagine glycosylation sites follow: N111 and N118. A glycan (N-linked (GlcNAc...) asparagine; partial) is linked at N165. Residues 170–171 (RD) and E223 each bind substrate. N-linked (GlcNAc...) asparagine; partial glycans are attached at residues N266 and N275. Substrate is bound at residue W311. N356, N369, N384, and N398 each carry an N-linked (GlcNAc...) asparagine glycan. N-linked (GlcNAc...) asparagine; partial glycosylation occurs at N512.

The protein belongs to the glycosyl hydrolase 32 family. Post-translationally, isoform Secreted is glycosylated. Isoform Intracellular is not glycosylated.

It localises to the cytoplasm. The protein localises to the secreted. The catalysed reaction is Hydrolysis of terminal non-reducing beta-D-fructofuranoside residues in beta-D-fructofuranosides.. The protein is Invertase 2 (SUC2) of Saccharomyces cerevisiae (strain ATCC 204508 / S288c) (Baker's yeast).